The sequence spans 194 residues: MLNELILTAVAYIVGSIPTGLLLARASGVDIRATGSGNIGATNVYRTLGRTVGIATLLGDCLKGLVPVLVARKLGFADPWVAAVGLAAFLGHVYTIFLGFKGGKGVATALGVFLGVSPLSVLGALALFIGIVATTRYISLGSIIAAAAMPLFVAAVERRPLLVGMTLVIAVIVIVKHRENIRRLREGTENRFKA.

A run of 5 helical transmembrane segments spans residues 4–24 (ELILTAVAYIVGSIPTGLLLA), 80–100 (WVAAVGLAAFLGHVYTIFLGF), 112–132 (VFLGVSPLSVLGALALFIGIV), 137–157 (YISLGSIIAAAAMPLFVAAVE), and 161–181 (LLVGMTLVIAVIVIVKHRENI).

This sequence belongs to the PlsY family. In terms of assembly, probably interacts with PlsX.

The protein localises to the cell inner membrane. The enzyme catalyses an acyl phosphate + sn-glycerol 3-phosphate = a 1-acyl-sn-glycero-3-phosphate + phosphate. It participates in lipid metabolism; phospholipid metabolism. Functionally, catalyzes the transfer of an acyl group from acyl-phosphate (acyl-PO(4)) to glycerol-3-phosphate (G3P) to form lysophosphatidic acid (LPA). This enzyme utilizes acyl-phosphate as fatty acyl donor, but not acyl-CoA or acyl-ACP. In Geobacter sulfurreducens (strain ATCC 51573 / DSM 12127 / PCA), this protein is Glycerol-3-phosphate acyltransferase.